The sequence spans 719 residues: Phosphoribosylformylglycinamidine synthase subunit PurL (719 aa).

His47 is a catalytic residue. The ATP site is built by Tyr50 and Lys89. Glu91 is a binding site for Mg(2+). Substrate contacts are provided by residues 92–95 (SHNH) and Arg114. His93 acts as the Proton acceptor in catalysis. Asp115 provides a ligand contact to Mg(2+). Gln238 serves as a coordination point for substrate. Asp266 lines the Mg(2+) pocket. A substrate-binding site is contributed by 310–312 (ESQ). ATP-binding residues include Asp488 and Gly525. Asn526 is a binding site for Mg(2+). Position 528 (Ser528) interacts with substrate.

This sequence belongs to the FGAMS family. As to quaternary structure, monomer. Part of the FGAM synthase complex composed of 1 PurL, 1 PurQ and 2 PurS subunits.

The protein localises to the cytoplasm. It carries out the reaction N(2)-formyl-N(1)-(5-phospho-beta-D-ribosyl)glycinamide + L-glutamine + ATP + H2O = 2-formamido-N(1)-(5-O-phospho-beta-D-ribosyl)acetamidine + L-glutamate + ADP + phosphate + H(+). It functions in the pathway purine metabolism; IMP biosynthesis via de novo pathway; 5-amino-1-(5-phospho-D-ribosyl)imidazole from N(2)-formyl-N(1)-(5-phospho-D-ribosyl)glycinamide: step 1/2. In terms of biological role, part of the phosphoribosylformylglycinamidine synthase complex involved in the purines biosynthetic pathway. Catalyzes the ATP-dependent conversion of formylglycinamide ribonucleotide (FGAR) and glutamine to yield formylglycinamidine ribonucleotide (FGAM) and glutamate. The FGAM synthase complex is composed of three subunits. PurQ produces an ammonia molecule by converting glutamine to glutamate. PurL transfers the ammonia molecule to FGAR to form FGAM in an ATP-dependent manner. PurS interacts with PurQ and PurL and is thought to assist in the transfer of the ammonia molecule from PurQ to PurL. The protein is Phosphoribosylformylglycinamidine synthase subunit PurL of Jannaschia sp. (strain CCS1).